The sequence spans 1113 residues: Carbamoyl phosphate synthase arginine-specific large chain (1113 aa).

The tract at residues 23 to 420 (QLIKGIDSVL…AFQKAFRQVD (398 aa)) is carboxyphosphate synthetic domain. ATP is bound by residues R150, R190, G196, G197, K227, L229, E234, G260, I261, H262, Q303, and E317. The region spanning 154 to 346 (ARALKEINMP…LAYTAAKIAL (193 aa)) is the ATP-grasp 1 domain. Q303, E317, and N319 together coordinate Mg(2+). Residues Q303, E317, and N319 each contribute to the Mn(2+) site. Residues 421 to 568 (PSLLGFQGSD…YVTYNAVKDD (148 aa)) form an oligomerization domain region. Residues 569 to 955 (VTFGDNGIMV…SYWVALQGLM (387 aa)) form a carbamoyl phosphate synthetic domain region. Residues 693–888 (STILDTLGLD…FVEIAVKAFL (196 aa)) form the ATP-grasp 2 domain. Positions 729, 768, 770, 775, 800, 801, 802, 803, 843, and 859 each coordinate ATP. The Mg(2+) site is built by Q843, E859, and N861. Mn(2+) is bound by residues Q843, E859, and N861. The tract at residues 956–1097 (SFCVPLPPSG…EMRQSDGPET (142 aa)) is allosteric domain. The MGS-like domain occupies 957–1113 (FCVPLPPSGI…WREYLGFKPT (157 aa)).

This sequence belongs to the CarB family. As to quaternary structure, heterodimer composed of 2 chains; the small (or glutamine) chain promotes the hydrolysis of glutamine to ammonia, which is used by the large (or ammonia) chain to synthesize carbamoyl phosphate. It depends on Mg(2+) as a cofactor. The cofactor is Mn(2+).

Its subcellular location is the cytoplasm. It carries out the reaction hydrogencarbonate + L-glutamine + 2 ATP + H2O = carbamoyl phosphate + L-glutamate + 2 ADP + phosphate + 2 H(+). It catalyses the reaction hydrogencarbonate + NH4(+) + 2 ATP = carbamoyl phosphate + 2 ADP + phosphate + 2 H(+). It participates in amino-acid biosynthesis; L-arginine biosynthesis; carbamoyl phosphate from bicarbonate: step 1/1. Functionally, large subunit of the arginine-specific carbamoyl phosphate synthase (CPSase). CPSase catalyzes the formation of carbamoyl phosphate from the ammonia moiety of glutamine, hydrogencarbonate, and phosphate donated by ATP, constituting the first step of 2 biosynthetic pathways, one leading to arginine and/or urea and the other to pyrimidine nucleotides. The large subunit (synthetase) binds the substrates ammonia (free or transferred from glutamine from the small subunit), hydrogencarbonate and ATP and carries out an ATP-coupled ligase reaction, activating hydrogencarbonate by forming carboxy phosphate which reacts with ammonia to form carbamoyl phosphate. This is Carbamoyl phosphate synthase arginine-specific large chain (CPA2) from Eremothecium gossypii (strain ATCC 10895 / CBS 109.51 / FGSC 9923 / NRRL Y-1056) (Yeast).